Here is a 421-residue protein sequence, read N- to C-terminus: Gamma-glutamyl phosphate reductase (421 aa).

It belongs to the gamma-glutamyl phosphate reductase family.

The protein localises to the cytoplasm. The enzyme catalyses L-glutamate 5-semialdehyde + phosphate + NADP(+) = L-glutamyl 5-phosphate + NADPH + H(+). The protein operates within amino-acid biosynthesis; L-proline biosynthesis; L-glutamate 5-semialdehyde from L-glutamate: step 2/2. Functionally, catalyzes the NADPH-dependent reduction of L-glutamate 5-phosphate into L-glutamate 5-semialdehyde and phosphate. The product spontaneously undergoes cyclization to form 1-pyrroline-5-carboxylate. The sequence is that of Gamma-glutamyl phosphate reductase from Stutzerimonas stutzeri (strain A1501) (Pseudomonas stutzeri).